The following is a 317-amino-acid chain: Heme A synthase (317 aa).

The Cytoplasmic portion of the chain corresponds to 1–6 (MQRSLK). The chain crosses the membrane as a helical span at residues 7–27 (WFASTTTVAMLFVLIGGALVT). Residues 28-54 (KTDSGMGCGRSWPLCHGQWIPDDITPQ) lie on the Extracellular side of the membrane. The cysteines at positions 35 and 42 are disulfide-linked. A helical membrane pass occupies residues 55–75 (LVIELSHRLVSGLAAIMVLIL). Glu-58 is an active-site residue. Position 61 (His-61) interacts with heme o. Over 76–91 (CIRSWRVMGHVRETKP) the chain is Cytoplasmic. A helical membrane pass occupies residues 92 to 112 (LAVLSFVFLVLQSLIGAAAVV). Residues 113-123 (WGQSDFVMALH) lie on the Extracellular side of the membrane. His-123 serves as a coordination point for heme o. Residues 124 to 144 (FGISLISFAAVLLLTLLIFVV) form a helical membrane-spanning segment. Topologically, residues 145–159 (DKKFSPTSLQLDGQM) are cytoplasmic. The helical transmembrane segment at 160-180 (RFHIYGIIIYSYLVVYTGALV) threads the bilayer. Residues 181-214 (RHTNASLACPSWPLCAKSRLLPVQFHEWVQMGHR) lie on the Extracellular side of the membrane. Cys-189 and Cys-195 form a disulfide bridge. His-213 provides a ligand contact to heme b. The chain crosses the membrane as a helical span at residues 215-235 (LAAAVIIIWIAVATVHAARYY). At 236–243 (REQPVIYY) the chain is on the cytoplasmic side. Residues 244-264 (GWIISLLLVLAQMVTGALVVF) traverse the membrane as a helical segment. Topologically, residues 265 to 272 (TELNLYIS) are extracellular. A helical transmembrane segment spans residues 273 to 293 (LAHAFFISCLFGVLSYLLLLA). Position 275 (His-275) interacts with heme b. Over 294-317 (LRTRRRPATAAGRSVEDTASAPLK) the chain is Cytoplasmic.

Belongs to the COX15/CtaA family. Type 1 subfamily. In terms of assembly, interacts with CtaB. The cofactor is heme b.

Its subcellular location is the cell membrane. The catalysed reaction is Fe(II)-heme o + 2 A + H2O = Fe(II)-heme a + 2 AH2. Its pathway is porphyrin-containing compound metabolism; heme A biosynthesis; heme A from heme O: step 1/1. Functionally, catalyzes the conversion of heme O to heme A by two successive hydroxylations of the methyl group at C8. The first hydroxylation forms heme I, the second hydroxylation results in an unstable dihydroxymethyl group, which spontaneously dehydrates, resulting in the formyl group of heme A. This is Heme A synthase from Geobacillus thermodenitrificans.